The chain runs to 254 residues: Persulfide dioxygenase ETHE1, mitochondrial (254 aa).

The N-terminal 7 residues, 1–7 (MASAVVR), are a transit peptide targeting the mitochondrion. Phosphoserine occurs at positions 14, 17, and 19. Lysine 32 bears the N6-acetyllysine; alternate mark. Lysine 32 is modified (N6-succinyllysine; alternate). The residue at position 66 (lysine 66) is an N6-acetyllysine. Fe cation is bound by residues histidine 79, histidine 135, and aspartate 154. The residue at position 172 (lysine 172) is an N6-acetyllysine; alternate. Lysine 172 is subject to N6-succinyllysine; alternate.

Belongs to the metallo-beta-lactamase superfamily. Glyoxalase II family. Homodimer. Monomer. Interacts with TST. May interact with RELA. Requires Fe(2+) as cofactor.

Its subcellular location is the cytoplasm. It is found in the nucleus. It localises to the mitochondrion matrix. It carries out the reaction S-sulfanylglutathione + O2 + H2O = sulfite + glutathione + 2 H(+). Functionally, first described as a protein that can shuttle between the nucleus and the cytoplasm and suppress p53-induced apoptosis by sequestering the transcription factor RELA/NFKB3 in the cytoplasm and preventing its accumulation in the nucleus. Sulfur dioxygenase that plays an essential role in hydrogen sulfide catabolism in the mitochondrial matrix. Hydrogen sulfide (H(2)S) is first oxidized by SQRDL, giving rise to cysteine persulfide residues. ETHE1 consumes molecular oxygen to catalyze the oxidation of the persulfide, once it has been transferred to a thiophilic acceptor, such as glutathione (R-SSH). Plays an important role in metabolic homeostasis in mitochondria by metabolizing hydrogen sulfide and preventing the accumulation of supraphysiological H(2)S levels that have toxic effects, due to the inhibition of cytochrome c oxidase. The chain is Persulfide dioxygenase ETHE1, mitochondrial (Ethe1) from Mus musculus (Mouse).